Here is a 337-residue protein sequence, read N- to C-terminus: MTRLISADKSEDDLLEASLRPRALSDYVGQEKAKGNLGLFIDAARGRSEALDHVLLYGPPGLGKTTLANIIACEMGVNIKSTSGPVIERPGDLAAILTNLEAHDVLFIDEIHRLSHVVEEILYPAMEDFQLDIIIGQGPSARTIKLDLPKFTLVGATTRAGLLSSPLRDRFGVISRLEFYTHEELAFIITRSARIFGMAIAPEGAMELARRSRGTPRIANRLLRRVRDFAQVRADGVITREVADQALALLEIDDMGFDMMDRAILLTIIDKFGGGPVGLDTIAAAISEESDTIEDVYEPFLIQNGFLNRTPRGRVATAAAYRHFGRIAPEPPQGKLF.

The large ATPase domain (RuvB-L) stretch occupies residues 1–180 (MTRLISADKS…FGVISRLEFY (180 aa)). Residues Leu-19, Arg-20, Gly-61, Lys-64, Thr-65, Thr-66, 127-129 (EDF), Arg-170, Tyr-180, and Arg-217 contribute to the ATP site. Thr-65 contacts Mg(2+). The segment at 181-251 (THEELAFIIT…VADQALALLE (71 aa)) is small ATPAse domain (RuvB-S). The tract at residues 254 to 337 (DMGFDMMDRA…APEPPQGKLF (84 aa)) is head domain (RuvB-H). Residues Arg-309 and Arg-314 each coordinate DNA.

The protein belongs to the RuvB family. As to quaternary structure, homohexamer. Forms an RuvA(8)-RuvB(12)-Holliday junction (HJ) complex. HJ DNA is sandwiched between 2 RuvA tetramers; dsDNA enters through RuvA and exits via RuvB. An RuvB hexamer assembles on each DNA strand where it exits the tetramer. Each RuvB hexamer is contacted by two RuvA subunits (via domain III) on 2 adjacent RuvB subunits; this complex drives branch migration. In the full resolvosome a probable DNA-RuvA(4)-RuvB(12)-RuvC(2) complex forms which resolves the HJ.

It localises to the cytoplasm. The enzyme catalyses ATP + H2O = ADP + phosphate + H(+). The RuvA-RuvB-RuvC complex processes Holliday junction (HJ) DNA during genetic recombination and DNA repair, while the RuvA-RuvB complex plays an important role in the rescue of blocked DNA replication forks via replication fork reversal (RFR). RuvA specifically binds to HJ cruciform DNA, conferring on it an open structure. The RuvB hexamer acts as an ATP-dependent pump, pulling dsDNA into and through the RuvAB complex. RuvB forms 2 homohexamers on either side of HJ DNA bound by 1 or 2 RuvA tetramers; 4 subunits per hexamer contact DNA at a time. Coordinated motions by a converter formed by DNA-disengaged RuvB subunits stimulates ATP hydrolysis and nucleotide exchange. Immobilization of the converter enables RuvB to convert the ATP-contained energy into a lever motion, pulling 2 nucleotides of DNA out of the RuvA tetramer per ATP hydrolyzed, thus driving DNA branch migration. The RuvB motors rotate together with the DNA substrate, which together with the progressing nucleotide cycle form the mechanistic basis for DNA recombination by continuous HJ branch migration. Branch migration allows RuvC to scan DNA until it finds its consensus sequence, where it cleaves and resolves cruciform DNA. The chain is Holliday junction branch migration complex subunit RuvB from Citrifermentans bemidjiense (strain ATCC BAA-1014 / DSM 16622 / JCM 12645 / Bem) (Geobacter bemidjiensis).